The chain runs to 393 residues: Formate-dependent phosphoribosylglycinamide formyltransferase (393 aa).

N(1)-(5-phospho-beta-D-ribosyl)glycinamide is bound by residues 22 to 23 (EL) and Glu-82. ATP contacts are provided by residues Arg-114, Lys-155, 160 to 165 (SSGKGQ), 195 to 198 (EGFI), and Glu-203. The ATP-grasp domain maps to 119–308 (RLAAEELDLP…QFALHARAIL (190 aa)). Residues Glu-267 and Glu-279 each contribute to the Mg(2+) site. Residues Asp-286, Lys-356, and 363–364 (RR) contribute to the N(1)-(5-phospho-beta-D-ribosyl)glycinamide site.

This sequence belongs to the PurK/PurT family. Homodimer.

The catalysed reaction is N(1)-(5-phospho-beta-D-ribosyl)glycinamide + formate + ATP = N(2)-formyl-N(1)-(5-phospho-beta-D-ribosyl)glycinamide + ADP + phosphate + H(+). It functions in the pathway purine metabolism; IMP biosynthesis via de novo pathway; N(2)-formyl-N(1)-(5-phospho-D-ribosyl)glycinamide from N(1)-(5-phospho-D-ribosyl)glycinamide (formate route): step 1/1. In terms of biological role, involved in the de novo purine biosynthesis. Catalyzes the transfer of formate to 5-phospho-ribosyl-glycinamide (GAR), producing 5-phospho-ribosyl-N-formylglycinamide (FGAR). Formate is provided by PurU via hydrolysis of 10-formyl-tetrahydrofolate. The sequence is that of Formate-dependent phosphoribosylglycinamide formyltransferase from Pseudomonas putida (strain GB-1).